A 416-amino-acid polypeptide reads, in one-letter code: Probable mannose-6-phosphate isomerase (416 aa).

Q99, H101, E126, and H259 together coordinate Zn(2+). R278 is a catalytic residue.

The protein belongs to the mannose-6-phosphate isomerase type 1 family. Requires Zn(2+) as cofactor.

The protein resides in the cytoplasm. The enzyme catalyses D-mannose 6-phosphate = D-fructose 6-phosphate. It functions in the pathway nucleotide-sugar biosynthesis; GDP-alpha-D-mannose biosynthesis; alpha-D-mannose 1-phosphate from D-fructose 6-phosphate: step 1/2. Functionally, involved in the synthesis of the GDP-mannose and dolichol-phosphate-mannose required for a number of critical mannosyl transfer reactions. The polypeptide is Probable mannose-6-phosphate isomerase (Caenorhabditis elegans).